A 188-amino-acid chain; its full sequence is Elongation factor P (188 aa).

The residue at position 34 (Lys-34) is an N6-(3,6-diaminohexanoyl)-5-hydroxylysine.

Belongs to the elongation factor P family. May be beta-lysylated on the epsilon-amino group of Lys-34 by the combined action of EpmA and EpmB, and then hydroxylated on the C5 position of the same residue by EpmC (if this protein is present). Lysylation is critical for the stimulatory effect of EF-P on peptide-bond formation. The lysylation moiety may extend toward the peptidyltransferase center and stabilize the terminal 3-CCA end of the tRNA. Hydroxylation of the C5 position on Lys-34 may allow additional potential stabilizing hydrogen-bond interactions with the P-tRNA.

It is found in the cytoplasm. It participates in protein biosynthesis; polypeptide chain elongation. Involved in peptide bond synthesis. Alleviates ribosome stalling that occurs when 3 or more consecutive Pro residues or the sequence PPG is present in a protein, possibly by augmenting the peptidyl transferase activity of the ribosome. Modification of Lys-34 is required for alleviation. The polypeptide is Elongation factor P (Xanthomonas axonopodis pv. citri (strain 306)).